Reading from the N-terminus, the 830-residue chain is Outer dense fiber protein 2 (830 aa).

A phosphoserine mark is found at S73 and S74. T92 carries the phosphothreonine modification. Position 95 is a phosphoserine; by TSSK4 (S95). Residues S106 and S109 each carry the phosphoserine modification. At T110 the chain carries Phosphothreonine. Phosphoserine is present on residues S115 and S129. K138 is covalently cross-linked (Glycyl lysine isopeptide (Lys-Gly) (interchain with G-Cter in SUMO2)). At S139 the chain carries Phosphoserine. The stretch at 144-217 forms a coiled coil; it reads QKGERQMAKR…MSKLVEAEMD (74 aa). T231 carries the phosphothreonine modification. 2 coiled-coil regions span residues 245–423 and 461–798; these read DINT…AEQL and EIIV…NYVQ. 2 positions are modified to phosphoserine: S261 and S632. The tract at residues 537–701 is interaction with BBOF1; it reads KNYEGMIDNY…EAIHQAQLRL (165 aa).

This sequence belongs to the ODF2 family. Self-associates. Associates with microtubules and forms a fibrillar structure partially linked to the microtubule network. Interacts via its C-terminus with PLK1. Interacts with ODF1. Interacts with MARK4; the interaction is required for localization of ODF2 to centrioles. Interacts with TSSK4. Interacts with AKNA. Interacts with CFAP58. Interacts with BBOF1. Interacts with CCDC38. Interacts with CCDC42. Tyrosine phosphorylated. Phosphorylated on Ser-95 by TSSK4. Testis-specific (at protein level). Expressed in spermatids at tubular stage V of the spermatogenic cycle. Highly expressed in the cytoplasm of elongating spermatids (tubular stages X/XI). In step 14/15 spermatids of tubular stage III/IV low expression detected. No expression detected in other testicular cells as well as the early round of spermatids.

Its subcellular location is the cytoplasm. The protein localises to the cytoskeleton. It is found in the microtubule organizing center. The protein resides in the centrosome. It localises to the cell projection. Its subcellular location is the cilium. The protein localises to the centriole. It is found in the spindle pole. The protein resides in the flagellum. Seems to be a major component of sperm tail outer dense fibers (ODF). ODFs are filamentous structures located on the outside of the axoneme in the midpiece and principal piece of the mammalian sperm tail and may help to maintain the passive elastic structures and elastic recoil of the sperm tail. May have a modulating influence on sperm motility. Functions as a general scaffold protein that is specifically localized at the distal/subdistal appendages of mother centrioles. Component of the centrosome matrix required for the localization of PLK1 and NIN to the centrosomes. Required for the formation and/or maintenance of normal CETN1 assembly. The protein is Outer dense fiber protein 2 (Odf2) of Mus musculus (Mouse).